A 505-amino-acid chain; its full sequence is Lysine--tRNA ligase (505 aa).

2 residues coordinate Mg(2+): E415 and E422.

This sequence belongs to the class-II aminoacyl-tRNA synthetase family. As to quaternary structure, homodimer. Mg(2+) serves as cofactor.

The protein localises to the cytoplasm. It carries out the reaction tRNA(Lys) + L-lysine + ATP = L-lysyl-tRNA(Lys) + AMP + diphosphate. The sequence is that of Lysine--tRNA ligase from Shigella dysenteriae serotype 1 (strain Sd197).